The sequence spans 281 residues: Ribose-phosphate pyrophosphokinase (281 aa).

ATP-binding positions include 33–35 (DGE) and 90–91 (RQ). Mg(2+)-binding residues include His-123 and Asp-161. Lys-185 is an active-site residue. Residues Arg-187 and Asp-211 each contribute to the D-ribose 5-phosphate site.

Belongs to the ribose-phosphate pyrophosphokinase family. Class III (archaeal) subfamily. Mg(2+) is required as a cofactor.

The protein resides in the cytoplasm. The catalysed reaction is D-ribose 5-phosphate + ATP = 5-phospho-alpha-D-ribose 1-diphosphate + AMP + H(+). It functions in the pathway metabolic intermediate biosynthesis; 5-phospho-alpha-D-ribose 1-diphosphate biosynthesis; 5-phospho-alpha-D-ribose 1-diphosphate from D-ribose 5-phosphate (route I): step 1/1. Its function is as follows. Involved in the biosynthesis of the central metabolite phospho-alpha-D-ribosyl-1-pyrophosphate (PRPP) via the transfer of pyrophosphoryl group from ATP to 1-hydroxyl of ribose-5-phosphate (Rib-5-P). The sequence is that of Ribose-phosphate pyrophosphokinase from Halobacterium salinarum (strain ATCC 29341 / DSM 671 / R1).